The chain runs to 967 residues: Kinesin-like protein KIF28P (967 aa).

The 349-residue stretch at aspartate 7–isoleucine 355 folds into the Kinesin motor domain. Glycine 111–serine 118 contributes to the ATP binding site. The region spanning alanine 410–glycine 472 is the FHA domain. Residues asparagine 822 to glutamate 851 are a coiled coil.

The protein belongs to the TRAFAC class myosin-kinesin ATPase superfamily. Kinesin family.

The protein resides in the mitochondrion membrane. Microtubule-dependent motor protein required for mitochondrion morphology and transport of mitochondria in neuronal cells. This Homo sapiens (Human) protein is Kinesin-like protein KIF28P (KIF28P).